The sequence spans 518 residues: Cytochrome P450 1A1 (518 aa).

The interval 33–44 (SKPRVPKGLKRL) is mitochondrial targeting signal. O-linked (GlcNAc) serine glycosylation occurs at Ser71. Phe228 lines the substrate pocket. Cys461 is a binding site for heme.

Belongs to the cytochrome P450 family. As to quaternary structure, interacts with cytosolic chaperones HSP70 and HSP90; this interaction is required for initial targeting to mitochondria. Interacts (via mitochondrial targeting signal) with TOMM40 (via N-terminus); this interaction is required for translocation across the mitochondrial outer membrane. Heme serves as cofactor.

The protein resides in the endoplasmic reticulum membrane. Its subcellular location is the mitochondrion inner membrane. It localises to the microsome membrane. It is found in the cytoplasm. The enzyme catalyses an organic molecule + reduced [NADPH--hemoprotein reductase] + O2 = an alcohol + oxidized [NADPH--hemoprotein reductase] + H2O + H(+). It catalyses the reaction estrone + reduced [NADPH--hemoprotein reductase] + O2 = 2-hydroxyestrone + oxidized [NADPH--hemoprotein reductase] + H2O + H(+). It carries out the reaction estrone + reduced [NADPH--hemoprotein reductase] + O2 = 4-hydroxyestrone + oxidized [NADPH--hemoprotein reductase] + H2O + H(+). The catalysed reaction is estrone + reduced [NADPH--hemoprotein reductase] + O2 = 6alpha-hydroxyestrone + oxidized [NADPH--hemoprotein reductase] + H2O + H(+). The enzyme catalyses estrone + reduced [NADPH--hemoprotein reductase] + O2 = 15alpha-hydroxyestrone + oxidized [NADPH--hemoprotein reductase] + H2O + H(+). It catalyses the reaction estrone + reduced [NADPH--hemoprotein reductase] + O2 = 16alpha-hydroxyestrone + oxidized [NADPH--hemoprotein reductase] + H2O + H(+). It carries out the reaction 17beta-estradiol + reduced [NADPH--hemoprotein reductase] + O2 = 2-hydroxy-17beta-estradiol + oxidized [NADPH--hemoprotein reductase] + H2O + H(+). The catalysed reaction is 17beta-estradiol + reduced [NADPH--hemoprotein reductase] + O2 = 4-hydroxy-17beta-estradiol + oxidized [NADPH--hemoprotein reductase] + H2O + H(+). The enzyme catalyses 17beta-estradiol + reduced [NADPH--hemoprotein reductase] + O2 = 6alpha-hydroxy-17beta-estradiol + oxidized [NADPH--hemoprotein reductase] + H2O + H(+). It catalyses the reaction 17beta-estradiol + reduced [NADPH--hemoprotein reductase] + O2 = 7alpha-hydroxy-17beta-estradiol + oxidized [NADPH--hemoprotein reductase] + H2O + H(+). It carries out the reaction 17beta-estradiol + reduced [NADPH--hemoprotein reductase] + O2 = 15alpha-hydroxy-17beta-estradiol + oxidized [NADPH--hemoprotein reductase] + H2O + H(+). The catalysed reaction is (5Z,8Z,11Z)-eicosatrienoate + reduced [NADPH--hemoprotein reductase] + O2 = 19-hydroxy-(5Z,8Z,11Z)-eicosatrienoate + oxidized [NADPH--hemoprotein reductase] + H2O + H(+). The enzyme catalyses (5Z,8Z,11Z,14Z)-eicosatetraenoate + reduced [NADPH--hemoprotein reductase] + O2 = 16-hydroxy-(5Z,8Z,11Z,14Z)-eicosatetraenoate + oxidized [NADPH--hemoprotein reductase] + H2O + H(+). It catalyses the reaction (5Z,8Z,11Z,14Z)-eicosatetraenoate + reduced [NADPH--hemoprotein reductase] + O2 = 17-hydroxy-(5Z,8Z,11Z,14Z)-eicosatetraenoate + oxidized [NADPH--hemoprotein reductase] + H2O + H(+). It carries out the reaction (5Z,8Z,11Z,14Z)-eicosatetraenoate + reduced [NADPH--hemoprotein reductase] + O2 = 18-hydroxy-(5Z,8Z,11Z,14Z)-eicosatetraenoate + oxidized [NADPH--hemoprotein reductase] + H2O + H(+). The catalysed reaction is (5Z,8Z,11Z,14Z)-eicosatetraenoate + reduced [NADPH--hemoprotein reductase] + O2 = 19-hydroxy-(5Z,8Z,11Z,14Z)-eicosatetraenoate + oxidized [NADPH--hemoprotein reductase] + H2O + H(+). The enzyme catalyses (5Z,8Z,11Z,14Z,17Z)-eicosapentaenoate + reduced [NADPH--hemoprotein reductase] + O2 = 19-hydroxy-(5Z,8Z,11Z,14Z,17Z)-eicosapentaenoate + oxidized [NADPH--hemoprotein reductase] + H2O + H(+). It catalyses the reaction (5Z,8Z,11Z,14Z)-eicosatetraenoate + reduced [NADPH--hemoprotein reductase] + O2 = (8R,9S)-epoxy-(5Z,11Z,14Z)-eicosatrienoate + oxidized [NADPH--hemoprotein reductase] + H2O + H(+). It carries out the reaction (5Z,8Z,11Z,14Z)-eicosatetraenoate + reduced [NADPH--hemoprotein reductase] + O2 = (11R,12S)-epoxy-(5Z,8Z,14Z)-eicosatrienoate + oxidized [NADPH--hemoprotein reductase] + H2O + H(+). The catalysed reaction is (5Z,8Z,11Z,14Z)-eicosatetraenoate + reduced [NADPH--hemoprotein reductase] + O2 = (14S,15R)-epoxy-(5Z,8Z,11Z)-eicosatrienoate + oxidized [NADPH--hemoprotein reductase] + H2O + H(+). The enzyme catalyses (5Z,8Z,11Z,14Z)-eicosatetraenoate + reduced [NADPH--hemoprotein reductase] + O2 = (14R,15S)-epoxy-(5Z,8Z,11Z)-eicosatrienoate + oxidized [NADPH--hemoprotein reductase] + H2O + H(+). It catalyses the reaction (5Z,8Z,11Z,14Z,17Z)-eicosapentaenoate + reduced [NADPH--hemoprotein reductase] + O2 = (17R,18S)-epoxy-(5Z,8Z,11Z,14Z)-eicosatetraenoate + oxidized [NADPH--hemoprotein reductase] + H2O + H(+). It carries out the reaction (4Z,7Z,10Z,13Z,16Z,19Z)-docosahexaenoate + reduced [NADPH--hemoprotein reductase] + O2 = (19S,20R)-epoxy-(4Z,7Z,10Z,13Z,16Z)-docosapentaenoate + oxidized [NADPH--hemoprotein reductase] + H2O + H(+). The catalysed reaction is (4Z,7Z,10Z,13Z,16Z,19Z)-docosahexaenoate + reduced [NADPH--hemoprotein reductase] + O2 = (19R,20S)-epoxy-(4Z,7Z,10Z,13Z,16Z)-docosapentaenoate + oxidized [NADPH--hemoprotein reductase] + H2O + H(+). The enzyme catalyses all-trans-retinol + reduced [NADPH--hemoprotein reductase] + O2 = all-trans-retinal + oxidized [NADPH--hemoprotein reductase] + 2 H2O + H(+). It catalyses the reaction all-trans-retinal + reduced [NADPH--hemoprotein reductase] + O2 = all-trans-retinoate + oxidized [NADPH--hemoprotein reductase] + H2O + 2 H(+). It carries out the reaction (13S)-hydroperoxy-(9Z,11E)-octadecadienoate = 13-oxo-(9Z,11E)-octadecadienoate + H2O. The catalysed reaction is (12S)-hydroperoxy-(5Z,8Z,10E,14Z)-eicosatetraenoate = 12-oxo-(5Z,8Z,10E,14Z)-eicosatetraenoate + H2O. The enzyme catalyses (15S)-hydroperoxy-(5Z,8Z,11Z,13E)-eicosatetraenoate = 15-oxo-(5Z,8Z,11Z,13E)-eicosatetraenoate + H2O. It catalyses the reaction (5S)-hydroperoxy-(6E,8Z,11Z,14Z)-eicosatetraenoate = 5-oxo-(6E,8Z,11Z,14Z)-eicosatetraenoate + H2O. It functions in the pathway steroid hormone biosynthesis. It participates in lipid metabolism; fatty acid metabolism. The protein operates within cofactor metabolism; retinol metabolism. A cytochrome P450 monooxygenase involved in the metabolism of various endogenous substrates, including fatty acids, steroid hormones and vitamins. Mechanistically, uses molecular oxygen inserting one oxygen atom into a substrate, and reducing the second into a water molecule, with two electrons provided by NADPH via cytochrome P450 reductase (CPR; NADPH-ferrihemoprotein reductase). Catalyzes the hydroxylation of carbon-hydrogen bonds. Exhibits high catalytic activity for the formation of hydroxyestrogens from estrone (E1) and 17beta-estradiol (E2), namely 2-hydroxy E1 and E2, as well as D-ring hydroxylated E1 and E2 at the C15alpha and C16alpha positions. Displays different regioselectivities for polyunsaturated fatty acids (PUFA) hydroxylation. Catalyzes the epoxidation of double bonds of certain PUFA. Converts arachidonic acid toward epoxyeicosatrienoic acid (EET) regioisomers, 8,9-, 11,12-, and 14,15-EET, that function as lipid mediators in the vascular system. Displays an absolute stereoselectivity in the epoxidation of eicosapentaenoic acid (EPA) producing the 17(R),18(S) enantiomer. May play an important role in all-trans retinoic acid biosynthesis in extrahepatic tissues. Catalyzes two successive oxidative transformation of all-trans retinol to all-trans retinal and then to the active form all-trans retinoic acid. May also participate in eicosanoids metabolism by converting hydroperoxide species into oxo metabolites (lipoxygenase-like reaction, NADPH-independent). The polypeptide is Cytochrome P450 1A1 (CYP1A1) (Oryctolagus cuniculus (Rabbit)).